A 224-amino-acid polypeptide reads, in one-letter code: Putative gastrointestinal growth factor xP4 (224 aa).

An N-terminal signal peptide occupies residues 1 to 17 (MANSVFWAIAVALVLGA). P-type domains follow at residues 25–68 (YRCG…YTPW), 73–117 (TICN…YQPI), 123–167 (RDCS…FKPE), and 173–216 (LQCA…FYPD). 12 disulfides stabilise this stretch: Cys-27-Cys-53, Cys-37-Cys-52, Cys-47-Cys-64, Cys-75-Cys-102, Cys-86-Cys-101, Cys-96-Cys-113, Cys-125-Cys-152, Cys-136-Cys-151, Cys-146-Cys-163, Cys-175-Cys-201, Cys-185-Cys-200, and Cys-195-Cys-212. Asn-104 carries an N-linked (GlcNAc...) asparagine glycan.

Glycosylated. In terms of tissue distribution, stomach mucosa.

The protein resides in the secreted. May act as a growth factor. The chain is Putative gastrointestinal growth factor xP4 (p4) from Xenopus laevis (African clawed frog).